Here is a 471-residue protein sequence, read N- to C-terminus: NADH-quinone oxidoreductase subunit N (471 aa).

14 consecutive transmembrane segments (helical) span residues 6–26 (FILP…LGVY), 30–50 (SSNI…ILIF), 70–90 (LSSF…SIST), 98–118 (IFLI…MVMI), 123–143 (LMVF…LASF), 158–178 (FVLS…VYGF), 198–218 (LTFG…AVPF), 230–250 (PTAV…TVFI), 264–284 (WQPI…IAAI), 292–312 (LIAY…STGS), 320–340 (IVYM…LLML), 365–385 (LSLL…GFFA), 400–420 (FLAI…LKII), and 438–458 (IWLK…FIFP).

This sequence belongs to the complex I subunit 2 family. In terms of assembly, NDH-1 is composed of 14 different subunits. Subunits NuoA, H, J, K, L, M, N constitute the membrane sector of the complex.

It is found in the cell inner membrane. The catalysed reaction is a quinone + NADH + 5 H(+)(in) = a quinol + NAD(+) + 4 H(+)(out). Its function is as follows. NDH-1 shuttles electrons from NADH, via FMN and iron-sulfur (Fe-S) centers, to quinones in the respiratory chain. The immediate electron acceptor for the enzyme in this species is believed to be ubiquinone. Couples the redox reaction to proton translocation (for every two electrons transferred, four hydrogen ions are translocated across the cytoplasmic membrane), and thus conserves the redox energy in a proton gradient. This Pelagibacter ubique (strain HTCC1062) protein is NADH-quinone oxidoreductase subunit N.